Consider the following 487-residue polypeptide: Protein FAM221B (487 aa).

2 stretches are compositionally biased toward polar residues: residues 1-13 and 36-48; these read MEANKTTEGPQDT and HETPLQPSSSQKH. 2 disordered regions span residues 1–103 and 132–289; these read MEAN…QSVT and QLSP…VTSR. Over residues 81–103 the composition is skewed to low complexity; it reads PPVKSSSSGLLSLPPQLSPQSVT. 2 stretches are compositionally biased toward basic and acidic residues: residues 227 to 236 and 243 to 253; these read ESEHFPKHSF and AKEDESTKEGE. The residue at position 248 (Ser-248) is a Phosphoserine.

Belongs to the FAM221 family.

This is Protein FAM221B (Fam221b) from Mus musculus (Mouse).